A 139-amino-acid chain; its full sequence is Probable trafficking protein particle complex subunit 2 (139 aa).

This sequence belongs to the TRAPP small subunits family. Sedlin subfamily. As to quaternary structure, part of the multisubunit TRAPP (transport protein particle) complex.

The protein resides in the cytoplasm. The protein localises to the perinuclear region. It localises to the endoplasmic reticulum. Its subcellular location is the golgi apparatus. In terms of biological role, may play a role in vesicular transport from endoplasmic reticulum to Golgi. Involved in dsRNA uptake. The sequence is that of Probable trafficking protein particle complex subunit 2 from Drosophila melanogaster (Fruit fly).